Reading from the N-terminus, the 452-residue chain is Probable ECA polymerase (452 aa).

The next 11 helical transmembrane spans lie at 6–26 (FSGL…LTWF), 37–57 (VFFS…TSVL), 63–83 (VGVA…CFYG), 118–138 (VILM…NGFL), 155–175 (GVAL…VYFL), 181–201 (AWLF…MIVG), 207–227 (IIIA…ISLW), 228–248 (MLAA…LKRY), 341–361 (LVVM…GLII), 378–398 (YKAA…IVLA), and 410–430 (VFFL…FWLF).

This sequence belongs to the WzyE family. In terms of assembly, probably part of a complex composed of WzxE, WzyE and WzzE.

It is found in the cell inner membrane. Its pathway is bacterial outer membrane biogenesis; enterobacterial common antigen biosynthesis. In terms of biological role, probably involved in the polymerization of enterobacterial common antigen (ECA) trisaccharide repeat units. The polypeptide is Probable ECA polymerase (Salmonella choleraesuis (strain SC-B67)).